We begin with the raw amino-acid sequence, 167 residues long: Alpha-crystallin A chain (167 aa).

Met-1 bears the N-acetylmethionine mark. The 112-residue stretch at 47–158 folds into the sHSP domain; that stretch reads YYRQSFFRGF…GERPIPVSRE (112 aa). Zn(2+) is bound by residues His-94, Glu-96, His-101, and His-148. The interval 143–167 is disordered; that stretch reads SLDSSHGERPIPVSREEKPTSAPSS. A compositionally biased stretch (basic and acidic residues) spans 147 to 161; it reads SHGERPIPVSREEKP. An O-linked (GlcNAc) serine glycan is attached at Ser-156.

This sequence belongs to the small heat shock protein (HSP20) family. Heteropolymer composed of three CRYAA and one CRYAB subunits. Inter-subunit bridging via zinc ions enhances stability, which is crucial as there is no protein turn over in the lens. Can also form homodimers and homotetramers (dimers of dimers) which serve as the building blocks of homooligomers. Within homooligomers, the zinc-binding motif is created from residues of 3 different molecules. His-94 and Glu-96 from one molecule are ligands of the zinc ion, and His-101 and His-148 residues from additional molecules complete the site with tetrahedral coordination geometry.

The protein localises to the cytoplasm. The protein resides in the nucleus. Functionally, contributes to the transparency and refractive index of the lens. May act as a chaperone, preventing aggregation of various proteins under a wide range of stress conditions. The protein is Alpha-crystallin A chain (CRYAA) of Pelophylax lessonae (Pool frog).